A 201-amino-acid polypeptide reads, in one-letter code: Probable GTP-binding protein EngB (201 aa).

The EngB-type G domain occupies threonine 22–valine 195. GTP contacts are provided by residues glycine 30–serine 37, glycine 57–threonine 61, aspartate 75–glycine 78, threonine 142–aspartate 145, and phenylalanine 174–serine 176. Residues serine 37 and threonine 59 each coordinate Mg(2+).

The protein belongs to the TRAFAC class TrmE-Era-EngA-EngB-Septin-like GTPase superfamily. EngB GTPase family. It depends on Mg(2+) as a cofactor.

In terms of biological role, necessary for normal cell division and for the maintenance of normal septation. This chain is Probable GTP-binding protein EngB, found in Lachnoclostridium phytofermentans (strain ATCC 700394 / DSM 18823 / ISDg) (Clostridium phytofermentans).